The chain runs to 357 residues: Mannonate dehydratase (357 aa).

The protein belongs to the mannonate dehydratase family. Fe(2+) serves as cofactor. The cofactor is Mn(2+).

It carries out the reaction D-mannonate = 2-dehydro-3-deoxy-D-gluconate + H2O. It functions in the pathway carbohydrate metabolism; pentose and glucuronate interconversion. Functionally, catalyzes the dehydration of D-mannonate. The chain is Mannonate dehydratase from Sorangium cellulosum (strain So ce56) (Polyangium cellulosum (strain So ce56)).